The primary structure comprises 280 residues: NAD kinase (280 aa).

Asp60 (proton acceptor) is an active-site residue. NAD(+) contacts are provided by residues 60–61 (DG), 134–135 (ND), Arg145, Asp164, 175–180 (TAYSLS), and Gln234.

Belongs to the NAD kinase family. A divalent metal cation serves as cofactor.

It is found in the cytoplasm. It catalyses the reaction NAD(+) + ATP = ADP + NADP(+) + H(+). Its function is as follows. Involved in the regulation of the intracellular balance of NAD and NADP, and is a key enzyme in the biosynthesis of NADP. Catalyzes specifically the phosphorylation on 2'-hydroxyl of the adenosine moiety of NAD to yield NADP. This chain is NAD kinase, found in Carboxydothermus hydrogenoformans (strain ATCC BAA-161 / DSM 6008 / Z-2901).